We begin with the raw amino-acid sequence, 512 residues long: PTS system mannitol-specific EIICB component (512 aa).

The Cytoplasmic portion of the chain corresponds to 1–28 (MSQTEEKKGIGRRVQAFGSFLSSMIMPN). Residues 17-349 (FGSFLSSMIM…MKFTREPKQD (333 aa)) enclose the PTS EIIC type-2 domain. A helical membrane pass occupies residues 29-50 (IGAFIAWGFIAAIFIDNGWLPN). The Extracellular segment spans residues 51–54 (KDLA). Residues 55-75 (TLAGPMITYLIPLLIAFSGGR) form a helical membrane-spanning segment. Over 76 to 139 (LIYDLRGGII…QGFEMLFNNF (64 aa)) the chain is Cytoplasmic. Residues 140–161 (SAGILGFIMTIAGFKILAPLMK) form a helical membrane-spanning segment. The Extracellular portion of the chain corresponds to 162–170 (FIMHILSVA). A helical transmembrane segment spans residues 171 to 191 (VEALVHAHLLPLVSILVEPAK). Over 192-278 (IVFLNNAINH…VLMRPLLFIA (87 aa)) the chain is Cytoplasmic. A helical membrane pass occupies residues 279–298 (VILGGMTGVATYQATGFGFK). The Extracellular segment spans residues 299 to 318 (SPASPGSFIVYCLNAPRGEF). The chain crosses the membrane as a helical span at residues 319-340 (LHMLLGVFLAALVSFVVAALIM). Over 341 to 512 (KFTREPKQDL…LNNLKKDDQA (172 aa)) the chain is Cytoplasmic. Positions 355 to 402 (AQMENTKGKKSSVASKLVSSDKNVNTEENASGNVSETSSSDDDPEALL) are disordered. The segment covering 365-376 (SSVASKLVSSDK) has biased composition (low complexity). The segment covering 380–392 (TEENASGNVSETS) has biased composition (polar residues). The PTS EIIB type-2 domain occupies 419-512 (NHVIFACDAG…LNNLKKDDQA (94 aa)). Cys-425 functions as the Phosphocysteine intermediate; for EIIB activity in the catalytic mechanism. Residue Cys-425 is modified to Phosphocysteine; by EIIA.

Homodimer.

It is found in the cell membrane. The enzyme catalyses D-mannitol(out) + N(pros)-phospho-L-histidyl-[protein] = D-mannitol 1-phosphate(in) + L-histidyl-[protein]. Functionally, the phosphoenolpyruvate-dependent sugar phosphotransferase system (sugar PTS), a major carbohydrate active transport system, catalyzes the phosphorylation of incoming sugar substrates concomitantly with their translocation across the cell membrane. The enzyme II CmtAB PTS system is involved in D-mannitol transport. The polypeptide is PTS system mannitol-specific EIICB component (mtlA) (Staphylococcus aureus (strain Mu50 / ATCC 700699)).